The sequence spans 822 residues: MIVFMRIIHVAQTRRLMIRCNRIRQCGFSVKTAALDLESSDSIIPGLDSHAYGAMLRRCIQKNDPISAKAIHCDILKKGSCLDLFATNILLNAYVKAGFDKDALNLFDEMPERNNVSFVTLAQGYACQDPIGLYSRLHREGHELNPHVFTSFLKLFVSLDKAEICPWLHSPIVKLGYDSNAFVGAALINAYSVCGSVDSARTVFEGILCKDIVVWAGIVSCYVENGYFEDSLKLLSCMRMAGFMPNNYTFDTALKASIGLGAFDFAKGVHGQILKTCYVLDPRVGVGLLQLYTQLGDMSDAFKVFNEMPKNDVVPWSFMIARFCQNGFCNEAVDLFIRMREAFVVPNEFTLSSILNGCAIGKCSGLGEQLHGLVVKVGFDLDIYVSNALIDVYAKCEKMDTAVKLFAELSSKNEVSWNTVIVGYENLGEGGKAFSMFREALRNQVSVTEVTFSSALGACASLASMDLGVQVHGLAIKTNNAKKVAVSNSLIDMYAKCGDIKFAQSVFNEMETIDVASWNALISGYSTHGLGRQALRILDIMKDRDCKPNGLTFLGVLSGCSNAGLIDQGQECFESMIRDHGIEPCLEHYTCMVRLLGRSGQLDKAMKLIEGIPYEPSVMIWRAMLSASMNQNNEEFARRSAEEILKINPKDEATYVLVSNMYAGAKQWANVASIRKSMKEMGVKKEPGLSWIEHQGDVHYFSVGLSDHPDMKLINGMLEWLNMKATRAGYVPDRNAVLLDMDDEEKDKRLWVHSERLALAYGLVRMPSSRNRILIMKNLRICSDCHSAMKVISSIVQRDLVIRDMNRFHHFHAGVCSCGDHW.

The transit peptide at 1–70 directs the protein to the mitochondrion; that stretch reads MIVFMRIIHV…QKNDPISAKA (70 aa). 16 PPR repeats span residues 48–82, 83–117, 145–179, 180–210, 211–245, 246–280, 281–311, 312–346, 347–381, 382–416, 417–447, 448–482, 483–513, 514–548, 549–584, and 585–619; these read DSHAYGAMLRRCIQKNDPISAKAIHCDILKKGSCL, DLFATNILLNAYVKAGFDKDALNLFDEMPERNNVS, NPHVFTSFLKLFVSLDKAEICPWLHSPIVKLGYDS, NAFVGAALINAYSVCGSVDSARTVFEGILCK, DIVVWAGIVSCYVENGYFEDSLKLLSCMRMAGFMP, NNYTFDTALKASIGLGAFDFAKGVHGQILKTCYVL, DPRVGVGLLQLYTQLGDMSDAFKVFNEMPKN, DVVPWSFMIARFCQNGFCNEAVDLFIRMREAFVVP, NEFTLSSILNGCAIGKCSGLGEQLHGLVVKVGFDL, DIYVSNALIDVYAKCEKMDTAVKLFAELSSKNEVS, WNTVIVGYENLGEGGKAFSMFREALRNQVSV, TEVTFSSALGACASLASMDLGVQVHGLAIKTNNAK, KVAVSNSLIDMYAKCGDIKFAQSVFNEMETI, DVASWNALISGYSTHGLGRQALRILDIMKDRDCKP, NGLTFLGVLSGCSNAGLIDQGQECFESMIRDHGIEP, and CLEHYTCMVRLLGRSGQLDKAMKLIEGIPYEPSVM. The segment at 620 to 695 is type E motif; sequence IWRAMLSASM…EPGLSWIEHQ (76 aa). The type E(+) motif stretch occupies residues 696–726; sequence GDVHYFSVGLSDHPDMKLINGMLEWLNMKAT. Positions 727-822 are type DYW motif; the sequence is RAGYVPDRNA…AGVCSCGDHW (96 aa).

Belongs to the PPR family. PCMP-H subfamily.

It localises to the mitochondrion. The sequence is that of Putative pentatricopeptide repeat-containing protein At5g13230, mitochondrial (PCMP-H89) from Arabidopsis thaliana (Mouse-ear cress).